We begin with the raw amino-acid sequence, 284 residues long: Probable protein phosphatase 2C 41 (284 aa).

Residues 35-282 (SYGFYLVRGM…DDISCVVVRF (248 aa)) form the PPM-type phosphatase domain. Mn(2+) is bound by residues D72, G73, D234, and D273.

Belongs to the PP2C family. Requires Mg(2+) as cofactor. Mn(2+) is required as a cofactor.

The catalysed reaction is O-phospho-L-seryl-[protein] + H2O = L-seryl-[protein] + phosphate. It catalyses the reaction O-phospho-L-threonyl-[protein] + H2O = L-threonyl-[protein] + phosphate. This chain is Probable protein phosphatase 2C 41, found in Oryza sativa subsp. japonica (Rice).